A 508-amino-acid chain; its full sequence is Photosystem II CP47 reaction center protein (508 aa).

Transmembrane regions (helical) follow at residues 21–36 (SVHI…WAGS), 101–115 (IMFS…IWHW), 140–156 (GIHL…FGAF), 203–218 (IAAG…FHLS), 237–252 (VLSS…AFVV), and 457–472 (SFAL…HGAR).

This sequence belongs to the PsbB/PsbC family. PsbB subfamily. In terms of assembly, PSII is composed of 1 copy each of membrane proteins PsbA, PsbB, PsbC, PsbD, PsbE, PsbF, PsbH, PsbI, PsbJ, PsbK, PsbL, PsbM, PsbT, PsbX, PsbY, PsbZ, Psb30/Ycf12, at least 3 peripheral proteins of the oxygen-evolving complex and a large number of cofactors. It forms dimeric complexes. Binds multiple chlorophylls. PSII binds additional chlorophylls, carotenoids and specific lipids. serves as cofactor.

It is found in the plastid. The protein resides in the chloroplast thylakoid membrane. Functionally, one of the components of the core complex of photosystem II (PSII). It binds chlorophyll and helps catalyze the primary light-induced photochemical processes of PSII. PSII is a light-driven water:plastoquinone oxidoreductase, using light energy to abstract electrons from H(2)O, generating O(2) and a proton gradient subsequently used for ATP formation. This Guizotia abyssinica (Niger) protein is Photosystem II CP47 reaction center protein.